Here is a 623-residue protein sequence, read N- to C-terminus: Scarecrow-like protein 22 (623 aa).

Disordered regions lie at residues 62–90 (RSPS…AAAA) and 179–203 (PNPG…QPGS). Residues 63 to 80 (SPSPFVSSSTTTLSSSHG) are compositionally biased toward low complexity. Positions 235 to 622 (NDQDQSAVII…KELVTVSAWK (388 aa)) constitute a GRAS domain. The tract at residues 242–311 (VIIDQLFSAA…ALHSLLQDSS (70 aa)) is leucine repeat I (LRI). The tract at residues 330–398 (YRAFSETSPF…SSAPSLKITA (69 aa)) is VHIID. Positions 361–365 (IHIVD) match the VHIID motif. Residues 413–448 (FTEENLRSFAGETGVSFEIELLNMEILLNPTYWPLS) are leucine repeat II (LRII). Residues 458–545 (IAVNLPISSM…RFCVQPSIQK (88 aa)) form a PFYRE region. The tract at residues 548-622 (TNRYRWMERS…KELVTVSAWK (75 aa)) is SAW.

Belongs to the GRAS family. As to expression, expressed in seedlings, roots, leaves and flowers.

Its subcellular location is the nucleus. Functionally, probable transcription factor involved in plant development. This is Scarecrow-like protein 22 (SCL22) from Arabidopsis thaliana (Mouse-ear cress).